Here is a 198-residue protein sequence, read N- to C-terminus: Ribose 1,5-bisphosphate phosphokinase PhnN (198 aa).

25-32 contributes to the ATP binding site; it reads GPSGAGKD.

The protein belongs to the ribose 1,5-bisphosphokinase family.

It catalyses the reaction alpha-D-ribose 1,5-bisphosphate + ATP = 5-phospho-alpha-D-ribose 1-diphosphate + ADP. It participates in metabolic intermediate biosynthesis; 5-phospho-alpha-D-ribose 1-diphosphate biosynthesis; 5-phospho-alpha-D-ribose 1-diphosphate from D-ribose 5-phosphate (route II): step 3/3. Catalyzes the phosphorylation of ribose 1,5-bisphosphate to 5-phospho-D-ribosyl alpha-1-diphosphate (PRPP). In Bradyrhizobium diazoefficiens (strain JCM 10833 / BCRC 13528 / IAM 13628 / NBRC 14792 / USDA 110), this protein is Ribose 1,5-bisphosphate phosphokinase PhnN.